The primary structure comprises 367 residues: Alanine racemase (367 aa).

Residue Lys-35 is the Proton acceptor; specific for D-alanine of the active site. An N6-(pyridoxal phosphate)lysine modification is found at Lys-35. Residue Arg-130 coordinates substrate. Tyr-258 (proton acceptor; specific for L-alanine) is an active-site residue. Met-306 serves as a coordination point for substrate.

The protein belongs to the alanine racemase family. The cofactor is pyridoxal 5'-phosphate.

It carries out the reaction L-alanine = D-alanine. It participates in amino-acid biosynthesis; D-alanine biosynthesis; D-alanine from L-alanine: step 1/1. In terms of biological role, catalyzes the interconversion of L-alanine and D-alanine. May also act on other amino acids. The sequence is that of Alanine racemase (alr) from Acinetobacter baumannii (strain SDF).